The following is a 90-amino-acid chain: MASFVSFLVLLLAALILMPQGLATYYKPIKKPPVYKPPVYKPPVYKPPVYKPKPPVYKPKPPVYKPPYKKPPYKKPPYGKYPPVEDNTHA.

Residues 1–24 form the signal peptide; the sequence is MASFVSFLVLLLAALILMPQGLAT. Over residues 46–65 the composition is skewed to pro residues; that stretch reads KPPVYKPKPPVYKPKPPVYK. Residues 46–90 form a disordered region; that stretch reads KPPVYKPKPPVYKPKPPVYKPPYKKPPYKKPPYGKYPPVEDNTHA.

It belongs to the plant proline-rich protein superfamily. ENOD12 family.

The protein resides in the secreted. Its subcellular location is the cell wall. The sequence is that of Repetitive proline-rich cell wall protein 3 (PRP3) from Glycine max (Soybean).